The chain runs to 581 residues: Adenine deaminase (581 aa).

It belongs to the metallo-dependent hydrolases superfamily. Adenine deaminase family. The cofactor is Mn(2+).

The enzyme catalyses adenine + H2O + H(+) = hypoxanthine + NH4(+). This Brucella suis biovar 1 (strain 1330) protein is Adenine deaminase.